The sequence spans 301 residues: Phosphatidylcholine:diacylglycerol cholinephosphotransferase 1 (301 aa).

Residues 1 to 39 (MSAAAAETDVSLRRRSNSLNGNHTNGVAIDGTLDNNNRR) are disordered. The next 5 helical transmembrane spans lie at 88–108 (HWIP…EYTL), 141–161 (VLAA…VWTW), 171–191 (IAAL…QLPL), 202–222 (FPVG…GSMI), and 255–275 (GHYT…DSLA). Active-site residues include histidine 216, histidine 256, and aspartate 260.

The protein belongs to the phosphatidylcholine:diacylglycerol cholinephosphotransferase family.

It localises to the membrane. It carries out the reaction 1,2-ditetradecanoyl-sn-glycero-3-phosphocholine + 1,2-di-(9Z-octadecenoyl)-sn-glycerol = 1,2-ditetradecanoyl-sn-glycerol + 1,2-di-(9Z-octadecenoyl)-sn-glycero-3-phosphocholine. In terms of biological role, functions as a phosphatidylcholine:diacylglycerol cholinephosphotransferase that catalyzes the transfer of the phosphocholine headgroup from phosphatidylcholine (PC) to diacylglycerol, a major reaction for the transfer of 18:1 into phosphatidylcholine for desaturation and also for the reverse transfer of 18:2 and 18:3 into the triacylglycerols synthesis pathway. This chain is Phosphatidylcholine:diacylglycerol cholinephosphotransferase 1, found in Arabidopsis thaliana (Mouse-ear cress).